A 177-amino-acid polypeptide reads, in one-letter code: Inner membrane-spanning protein YciB (177 aa).

The next 5 helical transmembrane spans lie at 22–42, 50–70, 76–96, 121–141, and 149–169; these read IFIASGSLIVISGLICIIHWI, ISLFSFLSVFFFGSLTIFFHN, WKITIIYIIFSLVLLISQFFT, FIWSLFFLFCAILNIYIAYYF, and FKVFGFTSLTFFLILITSIYI.

It belongs to the YciB family.

The protein resides in the cell inner membrane. Functionally, plays a role in cell envelope biogenesis, maintenance of cell envelope integrity and membrane homeostasis. In Buchnera aphidicola subsp. Acyrthosiphon pisum (strain APS) (Acyrthosiphon pisum symbiotic bacterium), this protein is Inner membrane-spanning protein YciB.